Consider the following 327-residue polypeptide: ATP-dependent (S)-NAD(P)H-hydrate dehydratase (327 aa).

Positions 11–313 (LLTRVKRIIP…RHVGKAYNAL (303 aa)) constitute a YjeF C-terminal domain. (6S)-NADPHX contacts are provided by residues G121 and 174–180 (NVIEFKR). Residues 209-213 (KGQSD) and 228-237 (GGLKRCGGQG) contribute to the ATP site. A (6S)-NADPHX-binding site is contributed by D238.

The protein belongs to the NnrD/CARKD family. It depends on Mg(2+) as a cofactor.

The protein resides in the cytoplasm. The enzyme catalyses (6S)-NADHX + ATP = ADP + phosphate + NADH + H(+). The catalysed reaction is (6S)-NADPHX + ATP = ADP + phosphate + NADPH + H(+). Catalyzes the dehydration of the S-form of NAD(P)HX at the expense of ATP, which is converted to ADP. Together with NAD(P)HX epimerase, which catalyzes the epimerization of the S- and R-forms, the enzyme allows the repair of both epimers of NAD(P)HX, a damaged form of NAD(P)H that is a result of enzymatic or heat-dependent hydration. The chain is ATP-dependent (S)-NAD(P)H-hydrate dehydratase from Schizosaccharomyces pombe (strain 972 / ATCC 24843) (Fission yeast).